The sequence spans 312 residues: Olfactory receptor 1J21 (312 aa).

A run of 7 helical transmembrane segments spans residues alanine 29–isoleucine 49, proline 58–alanine 78, alanine 95–leucine 115, leucine 143–phenylalanine 163, leucine 197–serine 217, cysteine 241–phenylalanine 261, and valine 272–leucine 292.

It belongs to the G-protein coupled receptor 1 family.

It is found in the cell membrane. Odorant receptor. Activated by (+) and (-)-carvone. The sequence is that of Olfactory receptor 1J21 from Mus musculus (Mouse).